The chain runs to 400 residues: Tryptophan synthase beta chain (400 aa).

Lys92 carries the post-translational modification N6-(pyridoxal phosphate)lysine.

Belongs to the TrpB family. Tetramer of two alpha and two beta chains. It depends on pyridoxal 5'-phosphate as a cofactor.

The enzyme catalyses (1S,2R)-1-C-(indol-3-yl)glycerol 3-phosphate + L-serine = D-glyceraldehyde 3-phosphate + L-tryptophan + H2O. It functions in the pathway amino-acid biosynthesis; L-tryptophan biosynthesis; L-tryptophan from chorismate: step 5/5. Its function is as follows. The beta subunit is responsible for the synthesis of L-tryptophan from indole and L-serine. This is Tryptophan synthase beta chain from Chromobacterium violaceum (strain ATCC 12472 / DSM 30191 / JCM 1249 / CCUG 213 / NBRC 12614 / NCIMB 9131 / NCTC 9757 / MK).